A 301-amino-acid chain; its full sequence is Acetylglutamate kinase (301 aa).

Substrate-binding positions include Gly68–Gly69, Arg90, and Asn195.

Belongs to the acetylglutamate kinase family. ArgB subfamily.

The protein resides in the cytoplasm. The enzyme catalyses N-acetyl-L-glutamate + ATP = N-acetyl-L-glutamyl 5-phosphate + ADP. It functions in the pathway amino-acid biosynthesis; L-arginine biosynthesis; N(2)-acetyl-L-ornithine from L-glutamate: step 2/4. Functionally, catalyzes the ATP-dependent phosphorylation of N-acetyl-L-glutamate. The chain is Acetylglutamate kinase from Pseudomonas putida (strain W619).